The chain runs to 134 residues: Methylglyoxal synthase (134 aa).

Residues Met1 to Lys134 form the MGS-like domain. Substrate contacts are provided by residues His11, Lys15, and Thr37–Thr40. Catalysis depends on Asp63, which acts as the Proton donor/acceptor. Residue His90 coordinates substrate.

Belongs to the methylglyoxal synthase family.

It catalyses the reaction dihydroxyacetone phosphate = methylglyoxal + phosphate. Functionally, catalyzes the formation of methylglyoxal from dihydroxyacetone phosphate. The sequence is that of Methylglyoxal synthase from Thermoanaerobacterium thermosaccharolyticum (Clostridium thermosaccharolyticum).